Here is a 63-residue protein sequence, read N- to C-terminus: Large ribosomal subunit protein bL28 (63 aa).

Belongs to the bacterial ribosomal protein bL28 family.

This chain is Large ribosomal subunit protein bL28, found in Clostridium perfringens (strain ATCC 13124 / DSM 756 / JCM 1290 / NCIMB 6125 / NCTC 8237 / Type A).